A 479-amino-acid polypeptide reads, in one-letter code: Glycerol kinase 5 (479 aa).

Ser-20 and Ser-21 together coordinate ATP. Positions 90, 267, and 268 each coordinate glycerol. Positions 289, 332, and 432 each coordinate ATP.

It belongs to the FGGY kinase family.

Its subcellular location is the cytoplasm. It carries out the reaction glycerol + ATP = sn-glycerol 3-phosphate + ADP + H(+). The protein operates within polyol metabolism; glycerol degradation via glycerol kinase pathway; sn-glycerol 3-phosphate from glycerol: step 1/1. Its function is as follows. Skin-specific kinase that plays a key role in glycerol metabolism, catalyzing its phosphorylation to produce sn-glycerol 3-phosphate. Involved in skin-specific regulation of sterol regulatory element-binding protein (SREBP) processing and lipid biosynthesis. The polypeptide is Glycerol kinase 5 (gk5) (Xenopus laevis (African clawed frog)).